The following is a 132-amino-acid chain: MAMTDPLGDMLTRIRNGAARRKSSVSTPASKLRARVLDVLQAEGYIRGYSEVEFGNGKAELNIELKYYEGASVIREIARVSKPGRRVYVSVKSIPQVANGLGITILSTPKGVMADHQAREQNVGGELLCSVF.

It belongs to the universal ribosomal protein uS8 family. In terms of assembly, part of the 30S ribosomal subunit. Contacts proteins S5 and S12.

Functionally, one of the primary rRNA binding proteins, it binds directly to 16S rRNA central domain where it helps coordinate assembly of the platform of the 30S subunit. The protein is Small ribosomal subunit protein uS8 of Sinorhizobium fredii (strain NBRC 101917 / NGR234).